Consider the following 199-residue polypeptide: 7-methyl-GTP pyrophosphatase (199 aa).

The active-site Proton acceptor is aspartate 76.

This sequence belongs to the Maf family. YceF subfamily. A divalent metal cation is required as a cofactor.

The protein resides in the cytoplasm. The enzyme catalyses N(7)-methyl-GTP + H2O = N(7)-methyl-GMP + diphosphate + H(+). Its function is as follows. Nucleoside triphosphate pyrophosphatase that hydrolyzes 7-methyl-GTP (m(7)GTP). May have a dual role in cell division arrest and in preventing the incorporation of modified nucleotides into cellular nucleic acids. The chain is 7-methyl-GTP pyrophosphatase from Brucella abortus biovar 1 (strain 9-941).